Consider the following 357-residue polypeptide: Glutamine synthetase root isozyme 5 (357 aa).

A GS beta-grasp domain is found at 19 to 99 (IIAEYIWVGG…VMCDCYTPQG (81 aa)). One can recognise a GS catalytic domain in the interval 106 to 357 (KRYKAATVFS…ADTTILWKGN (252 aa)).

This sequence belongs to the glutamine synthetase family. As to quaternary structure, homooctamer. In terms of tissue distribution, found mainly in the cortical tissues of seedling roots, stem and seedling shoot.

Its subcellular location is the cytoplasm. The enzyme catalyses L-glutamate + NH4(+) + ATP = L-glutamine + ADP + phosphate + H(+). Plays a role in the flow of nitrogen into nitrogenous organic compounds. The protein is Glutamine synthetase root isozyme 5 (GS1-5) of Zea mays (Maize).